The primary structure comprises 81 residues: Costars family protein ABRACL (81 aa).

Position 1 is an N-acetylmethionine (methionine 1).

This sequence belongs to the costars family.

This is Costars family protein ABRACL (ABRACL) from Bos taurus (Bovine).